Consider the following 282-residue polypeptide: 4-hydroxy-3-methylbut-2-enyl diphosphate reductase (282 aa).

A [4Fe-4S] cluster-binding site is contributed by C12. (2E)-4-hydroxy-3-methylbut-2-enyl diphosphate-binding residues include H40 and H72. H40 and H72 together coordinate dimethylallyl diphosphate. The isopentenyl diphosphate site is built by H40 and H72. C94 is a binding site for [4Fe-4S] cluster. Position 122 (H122) interacts with (2E)-4-hydroxy-3-methylbut-2-enyl diphosphate. Dimethylallyl diphosphate is bound at residue H122. Residue H122 participates in isopentenyl diphosphate binding. The active-site Proton donor is E124. A (2E)-4-hydroxy-3-methylbut-2-enyl diphosphate-binding site is contributed by T160. Residue C188 participates in [4Fe-4S] cluster binding. Positions 216, 218, and 260 each coordinate (2E)-4-hydroxy-3-methylbut-2-enyl diphosphate. Dimethylallyl diphosphate is bound by residues S216, N218, and S260. Residues S216, N218, and S260 each coordinate isopentenyl diphosphate.

This sequence belongs to the IspH family. [4Fe-4S] cluster is required as a cofactor.

It carries out the reaction isopentenyl diphosphate + 2 oxidized [2Fe-2S]-[ferredoxin] + H2O = (2E)-4-hydroxy-3-methylbut-2-enyl diphosphate + 2 reduced [2Fe-2S]-[ferredoxin] + 2 H(+). The catalysed reaction is dimethylallyl diphosphate + 2 oxidized [2Fe-2S]-[ferredoxin] + H2O = (2E)-4-hydroxy-3-methylbut-2-enyl diphosphate + 2 reduced [2Fe-2S]-[ferredoxin] + 2 H(+). The protein operates within isoprenoid biosynthesis; dimethylallyl diphosphate biosynthesis; dimethylallyl diphosphate from (2E)-4-hydroxy-3-methylbutenyl diphosphate: step 1/1. It participates in isoprenoid biosynthesis; isopentenyl diphosphate biosynthesis via DXP pathway; isopentenyl diphosphate from 1-deoxy-D-xylulose 5-phosphate: step 6/6. In terms of biological role, catalyzes the conversion of 1-hydroxy-2-methyl-2-(E)-butenyl 4-diphosphate (HMBPP) into a mixture of isopentenyl diphosphate (IPP) and dimethylallyl diphosphate (DMAPP). Acts in the terminal step of the DOXP/MEP pathway for isoprenoid precursor biosynthesis. This Geotalea uraniireducens (strain Rf4) (Geobacter uraniireducens) protein is 4-hydroxy-3-methylbut-2-enyl diphosphate reductase.